The sequence spans 65 residues: Large ribosomal subunit protein uL30 (65 aa).

Belongs to the universal ribosomal protein uL30 family. As to quaternary structure, part of the 50S ribosomal subunit.

The chain is Large ribosomal subunit protein uL30 from Brucella suis (strain ATCC 23445 / NCTC 10510).